The primary structure comprises 145 residues: D-aminoacyl-tRNA deacylase (145 aa).

The short motif at 137–138 is the Gly-cisPro motif, important for rejection of L-amino acids element; it reads GP.

Belongs to the DTD family. As to quaternary structure, homodimer.

Its subcellular location is the cytoplasm. The enzyme catalyses glycyl-tRNA(Ala) + H2O = tRNA(Ala) + glycine + H(+). It carries out the reaction a D-aminoacyl-tRNA + H2O = a tRNA + a D-alpha-amino acid + H(+). Functionally, an aminoacyl-tRNA editing enzyme that deacylates mischarged D-aminoacyl-tRNAs. Also deacylates mischarged glycyl-tRNA(Ala), protecting cells against glycine mischarging by AlaRS. Acts via tRNA-based rather than protein-based catalysis; rejects L-amino acids rather than detecting D-amino acids in the active site. By recycling D-aminoacyl-tRNA to D-amino acids and free tRNA molecules, this enzyme counteracts the toxicity associated with the formation of D-aminoacyl-tRNA entities in vivo and helps enforce protein L-homochirality. The chain is D-aminoacyl-tRNA deacylase from Shewanella baltica (strain OS155 / ATCC BAA-1091).